Consider the following 409-residue polypeptide: Serine/threonine transporter SstT (409 aa).

Helical transmembrane passes span 17–37 (LVGQ…FFPA), 49–69 (FVSA…MASI), 83–103 (ILLL…IASF), 142–162 (ALIS…GIAF), 180–200 (VSLI…GLVA), 218–238 (LVVL…LIVF), 301–321 (GAAI…GIAV), 331–351 (VVAS…LLLI), and 357–377 (LFGI…IIAI).

The protein belongs to the dicarboxylate/amino acid:cation symporter (DAACS) (TC 2.A.23) family.

The protein resides in the cell inner membrane. The catalysed reaction is L-serine(in) + Na(+)(in) = L-serine(out) + Na(+)(out). The enzyme catalyses L-threonine(in) + Na(+)(in) = L-threonine(out) + Na(+)(out). Its function is as follows. Involved in the import of serine and threonine into the cell, with the concomitant import of sodium (symport system). This is Serine/threonine transporter SstT from Pseudomonas aeruginosa (strain LESB58).